The chain runs to 204 residues: Terpene cyclase trt1 (204 aa).

5 helical membrane passes run 44-64 (FMSI…YPIA), 67-87 (HWAG…FIVA), 103-122 (FARL…HLAL), 132-154 (FFWS…LVCR), and 169-189 (WFYI…FFYF).

This sequence belongs to the paxB family.

The protein localises to the membrane. The protein operates within secondary metabolite biosynthesis; terpenoid biosynthesis. Its function is as follows. Terpene cyclase; part of the gene cluster that mediates the biosynthesis of terretonin, a fungal meroterpenoid that acts as a mycotoxin. The first step of the pathway is the synthesis of 3,5-dimethylorsellinic acid (DMOA) by the polyketide synthase trt4. DMOA is then prenylated into farnesyl-DMOA by the polyprenyl transferase trt2. Methylation by the methyltransferase trt5 then leads to farnesyl-DMOA methyl ester which is further subject to epoxidation by the FAD-dependent monooxygenase trt8 to yield epoxyfarnesyl-DMOA methyl ester. Cyclization of epoxyfarnesyl-DMOA methyl ester by the terpene cyclase trt1 leads to a tetracycle intermediate which is in turn converted to preterretonin. Dehydrogenase trt9 comes next to transform preterretonin to preterrenoid. The FAD-dependent monooxygenase trt3 is then required for the C-hydroxylation at C16 of preterrenoid to yield terrenoid. The cytochrome P450 trt6 catalyzes three successive oxidations to transform terrenoid into an unstable intermediate, which then undergoes the D-ring expansion and unusual rearrangement of the methoxy group to afford the core skeleton of terretonin. Trt14 catalyzes the D-ring expansion of terretonin involving intramolecular methoxy rearrangement as well as the hydrolysis of the expanded D-ring and the methyl ester moiety. Finally, the nonheme iron-dependent dioxygenase trt7 accomplishes the last two oxidation reactions steps to complete the biosynthesis of terretonin. Terretonin C is produced via spontaneous decarboxylation of the terretonin precursor. Another shunt product of the terretonin biosynthesis is dihydrofarnesyl-DMOA, derived from epoxyfarnesyl-DMOA through hydrolysis of the epoxide. This is Terpene cyclase trt1 from Aspergillus terreus (strain NIH 2624 / FGSC A1156).